A 121-amino-acid polypeptide reads, in one-letter code: Small ribosomal subunit protein uS13 (121 aa).

A disordered region spans residues 89–121 (MRHRRGLPVRGQHTKNNARTRKGKAVSIAGKKK).

This sequence belongs to the universal ribosomal protein uS13 family. Part of the 30S ribosomal subunit. Forms a loose heterodimer with protein S19. Forms two bridges to the 50S subunit in the 70S ribosome.

Its function is as follows. Located at the top of the head of the 30S subunit, it contacts several helices of the 16S rRNA. In the 70S ribosome it contacts the 23S rRNA (bridge B1a) and protein L5 of the 50S subunit (bridge B1b), connecting the 2 subunits; these bridges are implicated in subunit movement. Contacts the tRNAs in the A and P-sites. In Levilactobacillus brevis (strain ATCC 367 / BCRC 12310 / CIP 105137 / JCM 1170 / LMG 11437 / NCIMB 947 / NCTC 947) (Lactobacillus brevis), this protein is Small ribosomal subunit protein uS13.